We begin with the raw amino-acid sequence, 131 residues long: MALSDSIGDFLTRIRNAQLAMHRATRVLFSKMNSSILEILKEEGYILDYEKQVVDNLPSFIVKLKYYEKSPVISDIVRVSKPGCRRYSKYKDISKAYNGLGIFIISTPKGVMTDYNAHKLKVGGEVLCRVF.

This sequence belongs to the universal ribosomal protein uS8 family. In terms of assembly, part of the 30S ribosomal subunit. Contacts proteins S5 and S12.

One of the primary rRNA binding proteins, it binds directly to 16S rRNA central domain where it helps coordinate assembly of the platform of the 30S subunit. The chain is Small ribosomal subunit protein uS8 from Wolbachia pipientis wMel.